The following is a 356-amino-acid chain: S-adenosylmethionine:tRNA ribosyltransferase-isomerase (356 aa).

Belongs to the QueA family. Monomer.

The protein resides in the cytoplasm. It catalyses the reaction 7-aminomethyl-7-carbaguanosine(34) in tRNA + S-adenosyl-L-methionine = epoxyqueuosine(34) in tRNA + adenine + L-methionine + 2 H(+). The protein operates within tRNA modification; tRNA-queuosine biosynthesis. Its function is as follows. Transfers and isomerizes the ribose moiety from AdoMet to the 7-aminomethyl group of 7-deazaguanine (preQ1-tRNA) to give epoxyqueuosine (oQ-tRNA). The chain is S-adenosylmethionine:tRNA ribosyltransferase-isomerase from Escherichia coli O6:H1 (strain CFT073 / ATCC 700928 / UPEC).